Here is a 226-residue protein sequence, read N- to C-terminus: ATP synthase F(0) complex subunit a (226 aa).

6 helical membrane passes run Pro-12–Pro-32, Trp-68–Leu-88, Gln-97–Phe-117, Ile-138–Val-158, Ile-164–Ile-184, and Ala-189–Ile-209.

It belongs to the ATPase A chain family. As to quaternary structure, component of the ATP synthase complex composed at least of ATP5F1A/subunit alpha, ATP5F1B/subunit beta, ATP5MC1/subunit c (homooctomer), MT-ATP6/subunit a, MT-ATP8/subunit 8, ATP5ME/subunit e, ATP5MF/subunit f, ATP5MG/subunit g, ATP5MK/subunit k, ATP5MJ/subunit j, ATP5F1C/subunit gamma, ATP5F1D/subunit delta, ATP5F1E/subunit epsilon, ATP5PF/subunit F6, ATP5PB/subunit b, ATP5PD/subunit d, ATP5PO/subunit OSCP. ATP synthase complex consists of a soluble F(1) head domain (subunits alpha(3) and beta(3)) - the catalytic core - and a membrane F(0) domain - the membrane proton channel (subunits c, a, 8, e, f, g, k and j). These two domains are linked by a central stalk (subunits gamma, delta, and epsilon) rotating inside the F1 region and a stationary peripheral stalk (subunits F6, b, d, and OSCP). Interacts with DNAJC30; interaction is direct.

Its subcellular location is the mitochondrion inner membrane. The enzyme catalyses H(+)(in) = H(+)(out). In terms of biological role, subunit a, of the mitochondrial membrane ATP synthase complex (F(1)F(0) ATP synthase or Complex V) that produces ATP from ADP in the presence of a proton gradient across the membrane which is generated by electron transport complexes of the respiratory chain. ATP synthase complex consist of a soluble F(1) head domain - the catalytic core - and a membrane F(1) domain - the membrane proton channel. These two domains are linked by a central stalk rotating inside the F(1) region and a stationary peripheral stalk. During catalysis, ATP synthesis in the catalytic domain of F(1) is coupled via a rotary mechanism of the central stalk subunits to proton translocation. With the subunit c (ATP5MC1), forms the proton-conducting channel in the F(0) domain, that contains two crucial half-channels (inlet and outlet) that facilitate proton movement from the mitochondrial intermembrane space (IMS) into the matrix. Protons are taken up via the inlet half-channel and released through the outlet half-channel, following a Grotthuss mechanism. This is ATP synthase F(0) complex subunit a from Dasypus novemcinctus (Nine-banded armadillo).